The following is a 483-amino-acid chain: tRNA sulfurtransferase (483 aa).

A THUMP domain is found at 61–165 (AEVLEILTTT…DELLNQVIAR (105 aa)). Residues 183 to 184 (LI), Lys265, Gly287, and Gln296 contribute to the ATP site. The cysteines at positions 344 and 457 are disulfide-linked. A Rhodanese domain is found at 405–483 (EEGNAVVLDI…GFNNVKVYRP (79 aa)). Cys457 (cysteine persulfide intermediate) is an active-site residue.

The protein belongs to the ThiI family.

The protein resides in the cytoplasm. It carries out the reaction [ThiI sulfur-carrier protein]-S-sulfanyl-L-cysteine + a uridine in tRNA + 2 reduced [2Fe-2S]-[ferredoxin] + ATP + H(+) = [ThiI sulfur-carrier protein]-L-cysteine + a 4-thiouridine in tRNA + 2 oxidized [2Fe-2S]-[ferredoxin] + AMP + diphosphate. The catalysed reaction is [ThiS sulfur-carrier protein]-C-terminal Gly-Gly-AMP + S-sulfanyl-L-cysteinyl-[cysteine desulfurase] + AH2 = [ThiS sulfur-carrier protein]-C-terminal-Gly-aminoethanethioate + L-cysteinyl-[cysteine desulfurase] + A + AMP + 2 H(+). The protein operates within cofactor biosynthesis; thiamine diphosphate biosynthesis. In terms of biological role, catalyzes the ATP-dependent transfer of a sulfur to tRNA to produce 4-thiouridine in position 8 of tRNAs, which functions as a near-UV photosensor. Also catalyzes the transfer of sulfur to the sulfur carrier protein ThiS, forming ThiS-thiocarboxylate. This is a step in the synthesis of thiazole, in the thiamine biosynthesis pathway. The sulfur is donated as persulfide by IscS. The sequence is that of tRNA sulfurtransferase from Vibrio cholerae serotype O1 (strain ATCC 39315 / El Tor Inaba N16961).